We begin with the raw amino-acid sequence, 92 residues long: RNA-binding protein Hfq (92 aa).

The region spanning 9–68 (DPFLNALRRERVPVSIYLVNGIKLQGQVESFDQFVILLKNTVSQMVYKHAISTVVPSRPF) is the Sm domain. Residues 73-82 (HQATNAQAGY) are compositionally biased toward polar residues. A disordered region spans residues 73–92 (HQATNAQAGYNAQHDDGDEK).

This sequence belongs to the Hfq family. As to quaternary structure, homohexamer.

Functionally, RNA chaperone that binds small regulatory RNA (sRNAs) and mRNAs to facilitate mRNA translational regulation in response to envelope stress, environmental stress and changes in metabolite concentrations. Also binds with high specificity to tRNAs. This is RNA-binding protein Hfq from Shewanella pealeana (strain ATCC 700345 / ANG-SQ1).